A 205-amino-acid chain; its full sequence is ATP phosphoribosyltransferase (205 aa).

The protein belongs to the ATP phosphoribosyltransferase family. Short subfamily. As to quaternary structure, heteromultimer composed of HisG and HisZ subunits.

It is found in the cytoplasm. It catalyses the reaction 1-(5-phospho-beta-D-ribosyl)-ATP + diphosphate = 5-phospho-alpha-D-ribose 1-diphosphate + ATP. It functions in the pathway amino-acid biosynthesis; L-histidine biosynthesis; L-histidine from 5-phospho-alpha-D-ribose 1-diphosphate: step 1/9. Catalyzes the condensation of ATP and 5-phosphoribose 1-diphosphate to form N'-(5'-phosphoribosyl)-ATP (PR-ATP). Has a crucial role in the pathway because the rate of histidine biosynthesis seems to be controlled primarily by regulation of HisG enzymatic activity. The chain is ATP phosphoribosyltransferase from Staphylococcus carnosus (strain TM300).